A 256-amino-acid chain; its full sequence is N-acetylglucosaminyldiphosphoundecaprenol N-acetyl-beta-D-mannosaminyltransferase (256 aa).

Belongs to the glycosyltransferase 26 family. TagA/TarA subfamily.

The enzyme catalyses UDP-N-acetyl-alpha-D-mannosamine + N-acetyl-alpha-D-glucosaminyl-di-trans,octa-cis-undecaprenyl diphosphate = N-acetyl-beta-D-mannosaminyl-(1-&gt;4)-N-acetyl-alpha-D-glucosaminyl di-trans,octa-cis-undecaprenyl diphosphate + UDP + H(+). Its pathway is cell wall biogenesis; poly(glycerol phosphate) teichoic acid biosynthesis. Functionally, catalyzes the conversion of GlcNAc-PP-undecaprenol into ManNAc-GlcNAc-PP-undecaprenol, the first committed lipid intermediate in the de novo synthesis of teichoic acid. The polypeptide is N-acetylglucosaminyldiphosphoundecaprenol N-acetyl-beta-D-mannosaminyltransferase (Bacillus subtilis (strain 168)).